A 703-amino-acid chain; its full sequence is NADH-quinone oxidoreductase chain 12 (703 aa).

Helical transmembrane passes span 4 to 24, 30 to 50, 79 to 99, 116 to 136, 138 to 158, 179 to 199, 224 to 244, 256 to 276, 290 to 310, 325 to 345, 346 to 366, 381 to 401, 415 to 435, 475 to 495, 580 to 600, and 679 to 699; these read FVLF…RAIG, YLTT…FLSF, LTAI…MYSL, ARFF…VTAD, LLQM…LIGF, GDFG…SVQF, ANLL…QLLL, TPVS…FLVC, NFIV…GLVQ, LGYM…FHLL, THAF…HAMH, IPLT…VGIP, AIIE…VIAA, LGVL…PFFG, VSPF…YIAN, and LFHY…WVMM.

This sequence belongs to the complex I subunit 5 family. NDH-1 is composed of at least 14 different subunits, Nqo1 to Nqo14. The complex has a L-shaped structure, with the hydrophobic arm (subunits Nqo7, Nqo8, Nqo10 to Nqo14) embedded in the inner membrane and the hydrophilic peripheral arm (subunits Nqo1 to Nqo6, Nqo9) protruding into the bacterial cytoplasm. The hydrophilic domain contains all the redox centers.

It is found in the cell inner membrane. The catalysed reaction is a quinone + NADH + 5 H(+)(in) = a quinol + NAD(+) + 4 H(+)(out). NDH-1 shuttles electrons from NADH, via FMN and iron-sulfur (Fe-S) centers, to quinones in the respiratory chain. The immediate electron acceptor for the enzyme in this species is believed to be ubiquinone. Couples the redox reaction to proton translocation (for every two electrons transferred, four hydrogen ions are translocated across the cytoplasmic membrane), and thus conserves the redox energy in a proton gradient. This Paracoccus denitrificans protein is NADH-quinone oxidoreductase chain 12.